A 236-amino-acid polypeptide reads, in one-letter code: Small ribosomal subunit protein eS6 (236 aa).

Ser-232 and Ser-233 each carry phosphoserine.

It belongs to the eukaryotic ribosomal protein eS6 family. In terms of processing, phosphorylated.

The chain is Small ribosomal subunit protein eS6 (RPS6) from Debaryomyces hansenii (strain ATCC 36239 / CBS 767 / BCRC 21394 / JCM 1990 / NBRC 0083 / IGC 2968) (Yeast).